The primary structure comprises 79 residues: Small ribosomal subunit protein bS18 (79 aa).

It belongs to the bacterial ribosomal protein bS18 family. Part of the 30S ribosomal subunit. Forms a tight heterodimer with protein bS6.

In terms of biological role, binds as a heterodimer with protein bS6 to the central domain of the 16S rRNA, where it helps stabilize the platform of the 30S subunit. The sequence is that of Small ribosomal subunit protein bS18 from Latilactobacillus sakei subsp. sakei (strain 23K) (Lactobacillus sakei subsp. sakei).